Consider the following 170-residue polypeptide: Small ribosomal subunit protein uS5 (170 aa).

In terms of domain architecture, S5 DRBM spans 13–76 (LTEKLIGVNR…DQARRSMVKI (64 aa)).

Belongs to the universal ribosomal protein uS5 family. Part of the 30S ribosomal subunit. Contacts proteins S4 and S8.

Its function is as follows. With S4 and S12 plays an important role in translational accuracy. Located at the back of the 30S subunit body where it stabilizes the conformation of the head with respect to the body. The polypeptide is Small ribosomal subunit protein uS5 (Laribacter hongkongensis (strain HLHK9)).